The following is a 229-amino-acid chain: Large ribosomal subunit protein uL1 (229 aa).

The protein belongs to the universal ribosomal protein uL1 family. Part of the 50S ribosomal subunit.

Functionally, binds directly to 23S rRNA. The L1 stalk is quite mobile in the ribosome, and is involved in E site tRNA release. Its function is as follows. Protein L1 is also a translational repressor protein, it controls the translation of the L11 operon by binding to its mRNA. The polypeptide is Large ribosomal subunit protein uL1 (Streptococcus agalactiae serotype Ia (strain ATCC 27591 / A909 / CDC SS700)).